A 268-amino-acid polypeptide reads, in one-letter code: Interleukin-1 beta (268 aa).

Positions 1–116 are excised as a propeptide; the sequence is MAEVPELASE…TRNNDACVHD (116 aa).

This sequence belongs to the IL-1 family. In terms of assembly, monomer. In its precursor form, weakly interacts with full-length MEFV; the mature cytokine does not interact at all. Interacts with integrins ITGAV:ITGBV and ITGA5:ITGB1; integrin-binding is required for IL1B signaling. Interacts with cargo receptor TMED10; the interaction is direct and is required for the secretion of IL1B mature form. Interacts with HSP90AB1; the interaction facilitates cargo translocation into the ERGIC. Interacts with HSP90B1; the interaction facilitates cargo translocation into the ERGIC.

It localises to the cytoplasm. It is found in the cytosol. The protein resides in the secreted. The protein localises to the lysosome. Its subcellular location is the extracellular exosome. Functionally, potent pro-inflammatory cytokine. Initially discovered as the major endogenous pyrogen, induces prostaglandin synthesis, neutrophil influx and activation, T-cell activation and cytokine production, B-cell activation and antibody production, and fibroblast proliferation and collagen production. Promotes Th17 differentiation of T-cells. Synergizes with IL12/interleukin-12 to induce IFNG synthesis from T-helper 1 (Th1) cells. Plays a role in angiogenesis by inducing VEGF production synergistically with TNF and IL6. Involved in transduction of inflammation downstream of pyroptosis: its mature form is specifically released in the extracellular milieu by passing through the gasdermin-D (GSDMD) pore. This is Interleukin-1 beta (IL1B) from Macaca fascicularis (Crab-eating macaque).